The following is a 284-amino-acid chain: MDKHTDDRKKNNHWKAEDRKSAATEASETRSGGNYAKELARLQEEIAHLQAWVKKTGARIVIVFEGRDAAGKGGVIKRITERVSPRVFRVVALPAPTDREKTQIYMQRYIQQFPAAGEVVIFDRSWYNRPGVERVMGFCSEKKAKRFLEIAPRFEAAMIESGIVLLKYFLDVSEEEQDRRFRQRINDPLRQWKLSPMDVESYRRWWDYTRAYDEMIRMTDTDDAPWWIVPSDNKKQARVNCIAHILSSIPYERVKFEDPDLGKRQKRPADFEGDTRRRTVPNLF.

2 stretches are compositionally biased toward basic and acidic residues: residues 1-22 (MDKH…RKSA) and 260-277 (DLGK…DTRR). Disordered stretches follow at residues 1 to 32 (MDKH…TRSG) and 260 to 284 (DLGK…PNLF).

This sequence belongs to the polyphosphate kinase 2 (PPK2) family. Class I subfamily.

It catalyses the reaction [phosphate](n) + ATP = [phosphate](n+1) + ADP. The catalysed reaction is [phosphate](n) + GTP = [phosphate](n+1) + GDP. Uses inorganic polyphosphate (polyP) as a donor to convert ADP to ATP. Can also convert GDP to GTP, with lower efficiency. The polypeptide is ADP-polyphosphate phosphotransferase 3 (Rhizobium meliloti (strain 1021) (Ensifer meliloti)).